The following is a 103-amino-acid chain: Small ribosomal subunit protein uS10 (103 aa).

This sequence belongs to the universal ribosomal protein uS10 family. Part of the 30S ribosomal subunit.

In terms of biological role, involved in the binding of tRNA to the ribosomes. The chain is Small ribosomal subunit protein uS10 from Shewanella amazonensis (strain ATCC BAA-1098 / SB2B).